The chain runs to 248 residues: 3-deoxy-manno-octulosonate cytidylyltransferase (248 aa).

It belongs to the KdsB family.

The protein resides in the cytoplasm. The catalysed reaction is 3-deoxy-alpha-D-manno-oct-2-ulosonate + CTP = CMP-3-deoxy-beta-D-manno-octulosonate + diphosphate. It participates in nucleotide-sugar biosynthesis; CMP-3-deoxy-D-manno-octulosonate biosynthesis; CMP-3-deoxy-D-manno-octulosonate from 3-deoxy-D-manno-octulosonate and CTP: step 1/1. It functions in the pathway bacterial outer membrane biogenesis; lipopolysaccharide biosynthesis. In terms of biological role, activates KDO (a required 8-carbon sugar) for incorporation into bacterial lipopolysaccharide in Gram-negative bacteria. The polypeptide is 3-deoxy-manno-octulosonate cytidylyltransferase (Shigella boydii serotype 18 (strain CDC 3083-94 / BS512)).